We begin with the raw amino-acid sequence, 229 residues long: NAD-dependent protein deacetylase (229 aa).

One can recognise a Deacetylase sirtuin-type domain in the interval 1 to 229 (MNKLNEALKK…SDAVKVFEEI (229 aa)). Residues A20, R32, Q96, I98, D99, H114, T181, S182, N205, and V223 each coordinate NAD(+). 2 residues coordinate nicotinamide: I98 and D99. H114 acts as the Proton acceptor in catalysis.

It belongs to the sirtuin family. Class U subfamily.

The protein resides in the cytoplasm. The enzyme catalyses N(6)-acetyl-L-lysyl-[protein] + NAD(+) + H2O = 2''-O-acetyl-ADP-D-ribose + nicotinamide + L-lysyl-[protein]. In terms of biological role, NAD-dependent protein deacetylase which modulates the activities of several enzymes which are inactive in their acetylated form. The protein is NAD-dependent protein deacetylase of Listeria monocytogenes serovar 1/2a (strain ATCC BAA-679 / EGD-e).